The following is a 215-amino-acid chain: Large ribosomal subunit protein bL25 (215 aa).

The span at 192–203 (EEATEEEEEAAE) shows a compositional bias: acidic residues. Residues 192–215 (EEATEEEEEAAEPEVIKRKEEEEE) form a disordered region. The span at 205-215 (EVIKRKEEEEE) shows a compositional bias: basic and acidic residues.

The protein belongs to the bacterial ribosomal protein bL25 family. CTC subfamily. Part of the 50S ribosomal subunit; part of the 5S rRNA/L5/L18/L25 subcomplex. Contacts the 5S rRNA. Binds to the 5S rRNA independently of L5 and L18.

This is one of the proteins that binds to the 5S RNA in the ribosome where it forms part of the central protuberance. This is Large ribosomal subunit protein bL25 from Thermotoga sp. (strain RQ2).